Here is a 370-residue protein sequence, read N- to C-terminus: Formate dehydrogenase (370 aa).

Residues Ile-94 and Asn-120 each coordinate substrate. Residues 175–176 (RI), Asp-196, 231–235 (PLHES), Thr-257, Asp-283, and 312–315 (HMSG) contribute to the NAD(+) site.

This sequence belongs to the D-isomer specific 2-hydroxyacid dehydrogenase family. FDH subfamily. As to quaternary structure, homodimer.

Its subcellular location is the cytoplasm. The catalysed reaction is formate + NAD(+) = CO2 + NADH. Catalyzes the NAD(+)-dependent oxidation of formate to carbon dioxide. Formate oxidation is the final step in the methanol oxidation pathway in methylotrophic microorganisms. Has a role in the detoxification of exogenous formate in non-methylotrophic organisms. The polypeptide is Formate dehydrogenase (Chaetomium thermophilum (strain DSM 1495 / CBS 144.50 / IMI 039719) (Thermochaetoides thermophila)).